Here is a 45-residue protein sequence, read N- to C-terminus: Photosystem II reaction center protein K (45 aa).

Positions 1–8 are excised as a propeptide; sequence MFSINFLG. Residues 17-37 traverse the membrane as a helical segment; that stretch reads FDPIVDVLPIIPLLFLLLAFV.

This sequence belongs to the PsbK family. As to quaternary structure, PSII is composed of 1 copy each of membrane proteins PsbA, PsbB, PsbC, PsbD, PsbE, PsbF, PsbH, PsbI, PsbJ, PsbK, PsbL, PsbM, PsbT, PsbY, PsbZ, Psb30/Ycf12, at least 3 peripheral proteins of the oxygen-evolving complex and a large number of cofactors. It forms dimeric complexes.

The protein resides in the plastid. Its subcellular location is the chloroplast thylakoid membrane. Functionally, one of the components of the core complex of photosystem II (PSII). PSII is a light-driven water:plastoquinone oxidoreductase that uses light energy to abstract electrons from H(2)O, generating O(2) and a proton gradient subsequently used for ATP formation. It consists of a core antenna complex that captures photons, and an electron transfer chain that converts photonic excitation into a charge separation. This Euglena viridis (Cercaria viridis) protein is Photosystem II reaction center protein K.